Consider the following 468-residue polypeptide: Tripartite motif-containing protein 75 (468 aa).

The RING-type zinc finger occupies 16-57 (CSICLDYLSDPVTIECGHNFCRSCIQQSWLDLQELFPCPVCR). A B box-type zinc finger spans residues 92-133 (EETTLCEKHNQPLSVFCKEDLMVLCPLCTQPPDHQGHHVRPI). Cysteine 97, histidine 100, cysteine 119, and histidine 125 together coordinate Zn(2+). Positions 170–222 (LELREMVENQRQELSSEFEHLNQFLDREQQAVLSRLAEEEKDNQQKLSANITA) form a coiled coil. The 193-residue stretch at 276 to 468 (CSFPPQYSAL…LRICTGTVCE (193 aa)) folds into the B30.2/SPRY domain.

It belongs to the TRIM/RBCC family.

The protein resides in the cytoplasm. It is found in the cytoskeleton. The protein localises to the spindle. May play a role in female meiosis. This Homo sapiens (Human) protein is Tripartite motif-containing protein 75.